The sequence spans 610 residues: Elongation factor 4 (610 aa).

Residues 11–193 enclose the tr-type G domain; it reads EKIRNFSIIA…QIVEKVPAPS (183 aa). GTP-binding positions include 23–28 and 140–143; these read DHGKST and NKID.

It belongs to the TRAFAC class translation factor GTPase superfamily. Classic translation factor GTPase family. LepA subfamily.

It is found in the cell membrane. It carries out the reaction GTP + H2O = GDP + phosphate + H(+). Required for accurate and efficient protein synthesis under certain stress conditions. May act as a fidelity factor of the translation reaction, by catalyzing a one-codon backward translocation of tRNAs on improperly translocated ribosomes. Back-translocation proceeds from a post-translocation (POST) complex to a pre-translocation (PRE) complex, thus giving elongation factor G a second chance to translocate the tRNAs correctly. Binds to ribosomes in a GTP-dependent manner. This chain is Elongation factor 4, found in Streptococcus uberis (strain ATCC BAA-854 / 0140J).